Here is an 811-residue protein sequence, read N- to C-terminus: MAQQQAGARGSKLEIVAARGGSGGSSSAGDAEAPPLDVLRQDSLYRDATRPAHGHHGQESWMRTLRLGFQCVGILHADLGTSPLYVYQNTFKYGIKHEDDIIGVLSLIIYSFVLFTMVKIVFIALHANDDGDGGTFALYSLISRYAKVCLIPNQQAEDELVTRYNDHGKPPATLRRAQWMKSQLEKKPAKIAVFFLTIFATALAISDCVLNPSVSVLSAVNGLKLRAPHLTTDEVVWITVGILVVFFAVQRFGTDKIGYTFAPVVVVWLLLISGIGIYDLVKYDVGVLRAFNPKYIIDYFRRNKKDGWVQLGEVLLTFTGTEALFADLGYFSIKSIQLSSTFVLLPSVLCTYIGQAAYLRKHMDQQHIQNAFFNSIPRPLFWPMFVLAIMTSVIGCQAMVSCAFATMSHLQTLNCFPRIKILHTSRRYSGQLYSPEVNFFLCLLSCVITLSFRTTGFIVKAHEICVVLVMVITTILMTIVMLLVWKVNIWWIVLFFVVFMSTETVYLSAVLYKFTKGPYMPLAMSAVLMVIMFVWHYVHVKRYKFELEHTVSPNKVRELLERRDLKRVPGVGLFYTELVQGIPPIFPHLIEKIPTIHSVIVFISMKHLPIPHVDVSERFLFRQVEPKECMVFRCVARYGYRDTLEMADDFVTTLVEYLQYYIRDLNLYNTVEPLKMSCPSIRIDSFSWDRRPSGHGIYAEEMLTPIQSFSELTMHPVGMSSRLAQFQTTKMSLEEMLKIEEDQKLIQREVDNGVVYILGESEVVAKPHSNLLKKVVVNYIFNFLRKNSRKGEKMLSIPRRKLLKVGITYEI.

The Cytoplasmic segment spans residues M1–R66. The chain crosses the membrane as a helical span at residues L67–Y87. At Q88–D100 the chain is on the extracellular side. A helical transmembrane segment spans residues I101–V121. The Cytoplasmic portion of the chain corresponds to F122–K190. The chain crosses the membrane as a helical span at residues I191–N211. The Extracellular portion of the chain corresponds to P212–P228. The chain crosses the membrane as a helical span at residues H229–V249. Topologically, residues Q250–K256 are cytoplasmic. The chain crosses the membrane as a helical span at residues I257–I277. Over Y278–Q310 the chain is Extracellular. The helical transmembrane segment at L311 to F331 threads the bilayer. Residues S332 to Q337 are Cytoplasmic-facing. Residues L338–Y358 traverse the membrane as a helical segment. At L359 to P379 the chain is on the extracellular side. Residues L380–V400 traverse the membrane as a helical segment. Residues S401 to N438 lie on the Cytoplasmic side of the membrane. A helical transmembrane segment spans residues F439–V459. Residues K460–E463 are Extracellular-facing. The helical transmembrane segment at I464 to V484 threads the bilayer. Residues W485–N488 lie on the Cytoplasmic side of the membrane. The helical transmembrane segment at I489 to A509 threads the bilayer. The Extracellular portion of the chain corresponds to V510–Y519. A helical membrane pass occupies residues M520–V540. Over K541–I811 the chain is Cytoplasmic.

It belongs to the HAK/KUP transporter (TC 2.A.72.3) family.

It is found in the membrane. Its function is as follows. High-affinity potassium transporter. This is Probable potassium transporter 16 (HAK16) from Oryza sativa subsp. japonica (Rice).